The primary structure comprises 296 residues: uncharacterized protein (296 aa).

2 consecutive transmembrane segments (helical) span residues 82–102 and 117–137; these read VVAP…WSVQ and ISVL…SAIF.

It is found in the cell membrane. This is an uncharacterized protein from Sinorhizobium fredii (strain NBRC 101917 / NGR234).